The following is a 406-amino-acid chain: Putative sodium-coupled neutral amino acid transporter 11 (406 aa).

The Cytoplasmic segment spans residues Met1 to Pro7. The helical transmembrane segment at Leu8–Ile28 threads the bilayer. Residue Asn44 is glycosylated (N-linked (GlcNAc...) asparagine). A run of 6 helical transmembrane segments spans residues Gly48–Ile68, Val93–Ser113, Leu121–Ala141, Ala156–Ile176, Met202–Phe222, and Val241–Thr263. N-linked (GlcNAc...) asparagine glycosylation is present at Asn275. Helical transmembrane passes span Val279 to Ile299, Cys301 to Ile321, and Ile340 to Ala360.

This sequence belongs to the amino acid/polyamine transporter 2 family.

It is found in the membrane. Functionally, putative sodium-dependent amino acid/proton antiporter. This is Putative sodium-coupled neutral amino acid transporter 11 (SLC38A11) from Homo sapiens (Human).